A 107-amino-acid polypeptide reads, in one-letter code: Insulin (107 aa).

Positions 1–24 (MALWIRSLPLLALLVFSGPGTSYA) are cleaved as a signal peptide. Disulfide bonds link Cys31–Cys93, Cys43–Cys106, and Cys92–Cys97. Positions 57-84 (DVEQPLVSSPLRGEAGVLPFQQEEYEKV) are cleaved as a propeptide — c peptide.

The protein belongs to the insulin family. Heterodimer of a B chain and an A chain linked by two disulfide bonds.

The protein localises to the secreted. Insulin decreases blood glucose concentration. It increases cell permeability to monosaccharides, amino acids and fatty acids. It accelerates glycolysis, the pentose phosphate cycle, and glycogen synthesis in liver. The protein is Insulin (INS) of Gallus gallus (Chicken).